We begin with the raw amino-acid sequence, 842 residues long: Putative G-type lectin S-receptor-like serine/threonine-protein kinase At1g61610 (842 aa).

The N-terminal stretch at 1-22 is a signal peptide; it reads MAGFNRNLTLVTTLLIFHQLCS. N7, N23, N35, N60, N110, N123, N304, N351, and N380 each carry an N-linked (GlcNAc...) asparagine glycan. The Extracellular segment spans residues 23 to 443; that stretch reads NVSCSTSNSF…KLGGGKENST (421 aa). The Bulb-type lectin domain occupies 29–150; that stretch reads SNSFTRNHTI…SDRRKWYWES (122 aa). An EGF-like domain is found at 292–331; the sequence is PSTECEKYNRCGNYSVCDDSKEFDSGKCSCIDGFEPVHQD. Cystine bridges form between C296–C308 and C302–C319. Residues 350-431 enclose the PAN domain; sequence CNQSLVAGQE…GGNSINIRLA (82 aa). 2 disulfides stabilise this stretch: C385–C406 and C389–C395. N441 is a glycosylation site (N-linked (GlcNAc...) asparagine). Residues 444-464 traverse the membrane as a helical segment; it reads LWIIVFSVIGAFLLGLCIWIL. The Cytoplasmic segment spans residues 465-842; that stretch reads WKFKKSLKAF…DVTFTTIVGR (378 aa). Residues 525 to 814 enclose the Protein kinase domain; that stretch reads FAEENKLGQG…PRQPTFHSFL (290 aa). Residues 531 to 539 and K553 contribute to the ATP site; that span reads LGQGGFGTV. S559 carries the phosphoserine modification. Residues 614–631 are caM-binding; the sequence is SKQGSLDWRKRWEVIGGI. The Proton acceptor role is filled by D650. Phosphoserine occurs at positions 654 and 667. At T684 the chain carries Phosphothreonine. Residues S728 and S830 each carry the phosphoserine modification. At T837 the chain carries Phosphothreonine.

This sequence belongs to the protein kinase superfamily. Ser/Thr protein kinase family.

It is found in the cell membrane. The enzyme catalyses L-seryl-[protein] + ATP = O-phospho-L-seryl-[protein] + ADP + H(+). It carries out the reaction L-threonyl-[protein] + ATP = O-phospho-L-threonyl-[protein] + ADP + H(+). The chain is Putative G-type lectin S-receptor-like serine/threonine-protein kinase At1g61610 from Arabidopsis thaliana (Mouse-ear cress).